We begin with the raw amino-acid sequence, 354 residues long: Holliday junction branch migration complex subunit RuvB (354 aa).

The segment at 5-197 (TDDFSAADLP…FGIVARLEFY (193 aa)) is large ATPase domain (RuvB-L). ATP is bound by residues Leu-36, Arg-37, Gly-78, Lys-81, Thr-82, Thr-83, 144-146 (EDY), Arg-187, Tyr-197, and Arg-234. Residue Thr-82 coordinates Mg(2+). Residues 198-268 (TAEELGRIVR…IANKALAMLD (71 aa)) form a small ATPAse domain (RuvB-S) region. The segment at 271–354 (PQGFDVMDRK…PPVSGNDMFT (84 aa)) is head domain (RuvB-H). Residues Arg-307, Arg-326, and Arg-331 each coordinate DNA.

It belongs to the RuvB family. In terms of assembly, homohexamer. Forms an RuvA(8)-RuvB(12)-Holliday junction (HJ) complex. HJ DNA is sandwiched between 2 RuvA tetramers; dsDNA enters through RuvA and exits via RuvB. An RuvB hexamer assembles on each DNA strand where it exits the tetramer. Each RuvB hexamer is contacted by two RuvA subunits (via domain III) on 2 adjacent RuvB subunits; this complex drives branch migration. In the full resolvosome a probable DNA-RuvA(4)-RuvB(12)-RuvC(2) complex forms which resolves the HJ.

It localises to the cytoplasm. It catalyses the reaction ATP + H2O = ADP + phosphate + H(+). Its function is as follows. The RuvA-RuvB-RuvC complex processes Holliday junction (HJ) DNA during genetic recombination and DNA repair, while the RuvA-RuvB complex plays an important role in the rescue of blocked DNA replication forks via replication fork reversal (RFR). RuvA specifically binds to HJ cruciform DNA, conferring on it an open structure. The RuvB hexamer acts as an ATP-dependent pump, pulling dsDNA into and through the RuvAB complex. RuvB forms 2 homohexamers on either side of HJ DNA bound by 1 or 2 RuvA tetramers; 4 subunits per hexamer contact DNA at a time. Coordinated motions by a converter formed by DNA-disengaged RuvB subunits stimulates ATP hydrolysis and nucleotide exchange. Immobilization of the converter enables RuvB to convert the ATP-contained energy into a lever motion, pulling 2 nucleotides of DNA out of the RuvA tetramer per ATP hydrolyzed, thus driving DNA branch migration. The RuvB motors rotate together with the DNA substrate, which together with the progressing nucleotide cycle form the mechanistic basis for DNA recombination by continuous HJ branch migration. Branch migration allows RuvC to scan DNA until it finds its consensus sequence, where it cleaves and resolves cruciform DNA. In Polaromonas sp. (strain JS666 / ATCC BAA-500), this protein is Holliday junction branch migration complex subunit RuvB.